Consider the following 109-residue polypeptide: Large ribosomal subunit protein uL24 (109 aa).

Belongs to the universal ribosomal protein uL24 family. In terms of assembly, part of the 50S ribosomal subunit.

Functionally, one of two assembly initiator proteins, it binds directly to the 5'-end of the 23S rRNA, where it nucleates assembly of the 50S subunit. In terms of biological role, one of the proteins that surrounds the polypeptide exit tunnel on the outside of the subunit. The chain is Large ribosomal subunit protein uL24 from Ehrlichia chaffeensis (strain ATCC CRL-10679 / Arkansas).